Reading from the N-terminus, the 148-residue chain is Macrodomain Ter protein (148 aa).

Belongs to the MatP family. Homodimer.

It is found in the cytoplasm. Its function is as follows. Required for spatial organization of the terminus region of the chromosome (Ter macrodomain) during the cell cycle. Prevents early segregation of duplicated Ter macrodomains during cell division. Binds specifically to matS, which is a 13 bp signature motif repeated within the Ter macrodomain. The sequence is that of Macrodomain Ter protein from Haemophilus influenzae (strain PittGG).